The sequence spans 1259 residues: Telomerase reverse transcriptase (1259 aa).

Positions 742–1067 (RGEPRKAVRH…SFMPWSGLLI (326 aa)) constitute a Reverse transcriptase domain. 3 residues coordinate Mg(2+): D837, D999, and D1000.

Belongs to the reverse transcriptase family. Telomerase subfamily. Component of the telomerase ribonucleoprotein complex. In terms of tissue distribution, expressed in shoot apices and immature embryos.

The protein localises to the nucleus. It localises to the chromosome. It is found in the telomere. It carries out the reaction DNA(n) + a 2'-deoxyribonucleoside 5'-triphosphate = DNA(n+1) + diphosphate. Its function is as follows. Telomerase is a ribonucleoprotein enzyme essential for the replication of chromosome termini in most eukaryotes. It elongates telomeres. It is a reverse transcriptase that adds simple sequence repeats to chromosome ends by copying a template sequence within the RNA component of the enzyme. The chain is Telomerase reverse transcriptase (TERT) from Oryza sativa subsp. japonica (Rice).